We begin with the raw amino-acid sequence, 61 residues long: Metallothionein-2 (61 aa).

M1 bears the N-acetylmethionine mark. Residues 1 to 29 are beta; that stretch reads MDPNCSCATDGSCSCAGSCKCKQCKCTSC. 18 residues coordinate a divalent metal cation: C5, C7, C13, C15, C19, C21, C24, C26, C29, C33, C34, C36, C37, C41, C44, C48, C50, and C57. Positions 30–61 are alpha; sequence KKSCCSCCPVGCAKCSQGCICKEASDKCSCCA. S58 carries the post-translational modification Phosphoserine. A divalent metal cation-binding residues include C59 and C60.

The protein belongs to the metallothionein superfamily. Type 1 family.

Its function is as follows. Metallothioneins have a high content of cysteine residues that bind various heavy metals; these proteins are transcriptionally regulated by both heavy metals and glucocorticoids. This chain is Metallothionein-2 (Mt2), found in Rattus norvegicus (Rat).